The following is a 534-amino-acid chain: CTP synthase (534 aa).

Residues 1 to 267 (MTKYIFVTGG…DQIVCDHLKL (267 aa)) form an amidoligase domain region. A CTP-binding site is contributed by serine 13. A UTP-binding site is contributed by serine 13. 14 to 19 (SIGKGI) serves as a coordination point for ATP. Tyrosine 54 lines the L-glutamine pocket. An ATP-binding site is contributed by aspartate 71. Mg(2+)-binding residues include aspartate 71 and glutamate 141. Residues 148–150 (DIE), 188–193 (KTKPTQ), and lysine 224 contribute to the CTP site. UTP contacts are provided by residues 188-193 (KTKPTQ) and lysine 224. 240–242 (RDV) serves as a coordination point for ATP. In terms of domain architecture, Glutamine amidotransferase type-1 spans 292–534 (KIALVGKYVE…FVTAAIKNSN (243 aa)). L-glutamine is bound at residue glycine 354. Residue cysteine 381 is the Nucleophile; for glutamine hydrolysis of the active site. Residues 382 to 385 (LGMQ), glutamate 405, and arginine 463 contribute to the L-glutamine site. Catalysis depends on residues histidine 508 and glutamate 510.

The protein belongs to the CTP synthase family. Homotetramer.

The catalysed reaction is UTP + L-glutamine + ATP + H2O = CTP + L-glutamate + ADP + phosphate + 2 H(+). It carries out the reaction L-glutamine + H2O = L-glutamate + NH4(+). The enzyme catalyses UTP + NH4(+) + ATP = CTP + ADP + phosphate + 2 H(+). Its pathway is pyrimidine metabolism; CTP biosynthesis via de novo pathway; CTP from UDP: step 2/2. Allosterically activated by GTP, when glutamine is the substrate; GTP has no effect on the reaction when ammonia is the substrate. The allosteric effector GTP functions by stabilizing the protein conformation that binds the tetrahedral intermediate(s) formed during glutamine hydrolysis. Inhibited by the product CTP, via allosteric rather than competitive inhibition. Its function is as follows. Catalyzes the ATP-dependent amination of UTP to CTP with either L-glutamine or ammonia as the source of nitrogen. Regulates intracellular CTP levels through interactions with the four ribonucleotide triphosphates. The polypeptide is CTP synthase (Streptococcus pyogenes serotype M4 (strain MGAS10750)).